The sequence spans 1015 residues: DNA polymerase catalytic subunit (1015 aa).

Belongs to the DNA polymerase type-B family. As to quaternary structure, forms a complex with the ssDNA-binding protein BALF2, the DNA polymerase processivity factor BMRF1, and the alkaline exonuclease BGLF5. Interacts with the putative helicase-primase complex composed of BBLF4, BSLF1 and BBLF2/3 proteins; these interactions may coordinate leading and lagging strand DNA synthesis at the replication fork.

Its subcellular location is the host nucleus. The catalysed reaction is DNA(n) + a 2'-deoxyribonucleoside 5'-triphosphate = DNA(n+1) + diphosphate. Functionally, replicates viral genomic DNA in the late phase of lytic infection, producing long concatemeric DNA. The replication complex is composed of six viral proteins: the DNA polymerase, processivity factor, primase, primase-associated factor, helicase, and ssDNA-binding protein. This chain is DNA polymerase catalytic subunit, found in Epstein-Barr virus (strain B95-8) (HHV-4).